The sequence spans 93 residues: MKFAVILLFSLVVLAVASESVEEVRREIDIEDLPEQQRGCADLRQPCTEGDDCSCCGSEGVCNCSHPHKKGCYCKTAGPLEKLAKKFRGCKNK.

Residues 1–18 (MKFAVILLFSLVVLAVAS) form the signal peptide. The propeptide occupies 19-38 (ESVEEVRREIDIEDLPEQQR).

It belongs to the neurotoxin 31 family. Post-translationally, contains 5 disulfide bonds. Expressed by the venom gland.

It localises to the secreted. The polypeptide is U12-lycotoxin-Ls1b (Lycosa singoriensis (Wolf spider)).